A 303-amino-acid chain; its full sequence is Phosphate import ATP-binding protein PstB (303 aa).

The region spanning 56 to 298 (LSTSDVHVYY…PDHQLTEAYI (243 aa)) is the ABC transporter domain. ATP is bound at residue 88-95 (GPSGCGKS).

It belongs to the ABC transporter superfamily. Phosphate importer (TC 3.A.1.7) family. As to quaternary structure, the complex is composed of two ATP-binding proteins (PstB), two transmembrane proteins (PstC and PstA) and a solute-binding protein (PstS).

Its subcellular location is the cell inner membrane. It carries out the reaction phosphate(out) + ATP + H2O = ADP + 2 phosphate(in) + H(+). Its function is as follows. Part of the ABC transporter complex PstSACB involved in phosphate import. Responsible for energy coupling to the transport system. This chain is Phosphate import ATP-binding protein PstB, found in Acinetobacter baylyi (strain ATCC 33305 / BD413 / ADP1).